We begin with the raw amino-acid sequence, 375 residues long: Queuine tRNA-ribosyltransferase (375 aa).

Asp-89 acts as the Proton acceptor in catalysis. Residues 89–93 (DSGGF), Asp-143, Gln-187, and Gly-214 contribute to the substrate site. The RNA binding stretch occupies residues 245–251 (GVGKPED). Asp-264 serves as the catalytic Nucleophile. Residues 269 to 273 (TRNAR) form an RNA binding; important for wobble base 34 recognition region. Zn(2+)-binding residues include Cys-302, Cys-304, Cys-307, and His-333.

Belongs to the queuine tRNA-ribosyltransferase family. As to quaternary structure, homodimer. Within each dimer, one monomer is responsible for RNA recognition and catalysis, while the other monomer binds to the replacement base PreQ1. Requires Zn(2+) as cofactor.

The catalysed reaction is 7-aminomethyl-7-carbaguanine + guanosine(34) in tRNA = 7-aminomethyl-7-carbaguanosine(34) in tRNA + guanine. Its pathway is tRNA modification; tRNA-queuosine biosynthesis. Its function is as follows. Catalyzes the base-exchange of a guanine (G) residue with the queuine precursor 7-aminomethyl-7-deazaguanine (PreQ1) at position 34 (anticodon wobble position) in tRNAs with GU(N) anticodons (tRNA-Asp, -Asn, -His and -Tyr). Catalysis occurs through a double-displacement mechanism. The nucleophile active site attacks the C1' of nucleotide 34 to detach the guanine base from the RNA, forming a covalent enzyme-RNA intermediate. The proton acceptor active site deprotonates the incoming PreQ1, allowing a nucleophilic attack on the C1' of the ribose to form the product. After dissociation, two additional enzymatic reactions on the tRNA convert PreQ1 to queuine (Q), resulting in the hypermodified nucleoside queuosine (7-(((4,5-cis-dihydroxy-2-cyclopenten-1-yl)amino)methyl)-7-deazaguanosine). The sequence is that of Queuine tRNA-ribosyltransferase from Salmonella enteritidis PT4 (strain P125109).